Consider the following 594-residue polypeptide: Class I diterpene synthase TPS6, chloroplastic (594 aa).

Mg(2+) contacts are provided by Asp330, Asp334, Asn474, Gln477, and Glu482. The DDXXD motif signature appears at 330-334 (DDFFD).

Belongs to the terpene synthase family. The cofactor is Mg(2+). In terms of tissue distribution, mostly expressed in trichomes of leaves and fruits.

It is found in the plastid. Its subcellular location is the chloroplast. The catalysed reaction is peregrinol diphosphate = labd-13(16),14-diene-9-ol + diphosphate. The enzyme catalyses 9alpha-copalyl diphosphate = syn-isopimara-7,15-diene + diphosphate. The protein operates within secondary metabolite biosynthesis; terpenoid biosynthesis. Functionally, involved in the biosynthesis of labdane-type diterpenoid including cleroda-dienols, and peregrinol lactones and furan derivatives, dopaminergic diterpenoids that can bind to dopamine receptors in the human pituitary gland, have probably ability to lower prolactin levels, and are used to treat menstrual cycle disorders (e.g. premenstrual syndrome and mastodynia). Terpene synthase the catalyzes the conversion of peregrinol diphosphate to labda-13(16),14-dien-9-ol, and of syn-copalyl diphosophate to dehydroabietadiene and syn-isopimara-7,15-diene. This Vitex agnus-castus (Chaste tree) protein is Class I diterpene synthase TPS6, chloroplastic.